A 396-amino-acid chain; its full sequence is 3-amino-4-hydroxybenzoate 2-monooxygenase PtmB3 (396 aa).

FAD contacts are provided by residues Ala19, 38-39 (EQ), and Arg112. Tyr217 serves as the catalytic Proton acceptor. Asp295 provides a ligand contact to FAD. Positions 352 to 371 (RERGHEFHLPDGPQQRLRDR) are disordered.

This sequence belongs to the 6-hydroxynicotinate 3-monooxygenase family. FAD is required as a cofactor.

The enzyme catalyses 3-amino-4-hydroxybenzoate + NADPH + O2 + H(+) = 3-amino-2,4-dihydroxybenzoate + NADP(+) + H2O. The protein operates within antibiotic biosynthesis. Functionally, part of a gene cluster involved in the biosynthesis of thioplatensimycin (thioPTM) and platensimycin (PTM), potent and selective inhibitors of bacterial and mammalian fatty acid synthases. Catalyzes the hydroxylation of 3-amino-4-hydroxybenzoate (3,4-AHBA) to 3-amino-2,4-dihydroxybenzoate (3,2,4-ADHBA). The polypeptide is 3-amino-4-hydroxybenzoate 2-monooxygenase PtmB3 (Streptomyces platensis).